The following is a 518-amino-acid chain: MSKRALISVSDKEGIVEFAKKIQELGWEIISTGGTKAVLDQEEIPNIAIDEVTGFPEMMDGRVKTLHPLIHGALLGRRDLDSHMKSLAEHHISPIDLVVVNLYPFKETLLAGGSQAEMIEKIDIGGPSMLRSAAKNHAAVTVVCDPMDYEKVEKELSADGETSLELRQQLAAKVFRHTASYDALIAQYLTEEFPVEDTKPEKLTLTYDLKQGMRYGENPQQSADFYESGLPTTYSIAQSHQLHGKELSYNNVRDADAALQIARDFDEPTVVALKHMNPCGIGTAKNIEQAWDYAYEADPVSIFGGIIVLNREVTEETAQKMSKIFLEIIIAPSYSKEALEILSKKKNIRLLTVDFSKKEQSEKEALVTGVLGGLLVQNQDVIVENPKEWTVATKVQPTDRQMEAMKFAWKAVKFVKSNGIIVTNDHQTLGVGPGQTNRVGSVKIALEATADKDALLQENAVLGSDAFFPFADNIDEIAKAGIKAIVQPGGSVRDQEVIEACDKYGIAMVFTGLRHFRH.

Residues 1 to 144 form the MGS-like domain; the sequence is MSKRALISVS…KNHAAVTVVC (144 aa).

It belongs to the PurH family.

It carries out the reaction (6R)-10-formyltetrahydrofolate + 5-amino-1-(5-phospho-beta-D-ribosyl)imidazole-4-carboxamide = 5-formamido-1-(5-phospho-D-ribosyl)imidazole-4-carboxamide + (6S)-5,6,7,8-tetrahydrofolate. The enzyme catalyses IMP + H2O = 5-formamido-1-(5-phospho-D-ribosyl)imidazole-4-carboxamide. Its pathway is purine metabolism; IMP biosynthesis via de novo pathway; 5-formamido-1-(5-phospho-D-ribosyl)imidazole-4-carboxamide from 5-amino-1-(5-phospho-D-ribosyl)imidazole-4-carboxamide (10-formyl THF route): step 1/1. It functions in the pathway purine metabolism; IMP biosynthesis via de novo pathway; IMP from 5-formamido-1-(5-phospho-D-ribosyl)imidazole-4-carboxamide: step 1/1. This is Bifunctional purine biosynthesis protein PurH from Lactococcus lactis subsp. cremoris (strain SK11).